We begin with the raw amino-acid sequence, 346 residues long: Very-long-chain 3-oxoacyl-CoA reductase (346 aa).

The chain crosses the membrane as a helical span at residues valine 19 to threonine 39. NADP(+) is bound by residues valine 65, aspartate 119, asparagine 146, tyrosine 220, lysine 224, valine 253, and serine 255. Tyrosine 220 serves as the catalytic Proton donor. Lysine 224 functions as the Lowers pKa of active site Tyr in the catalytic mechanism.

This sequence belongs to the short-chain dehydrogenases/reductases (SDR) family.

Its subcellular location is the endoplasmic reticulum membrane. The enzyme catalyses a very-long-chain (3R)-3-hydroxyacyl-CoA + NADP(+) = a very-long-chain 3-oxoacyl-CoA + NADPH + H(+). The protein operates within lipid metabolism; fatty acid biosynthesis. Its function is as follows. Component of the microsomal membrane bound fatty acid elongation system, which produces the 26-carbon very long-chain fatty acids (VLCFA) from palmitate. Catalyzes the reduction of the 3-ketoacyl-CoA intermediate that is formed in each cycle of fatty acid elongation. VLCFAs serve as precursors for ceramide and sphingolipids. The protein is Very-long-chain 3-oxoacyl-CoA reductase of Scheffersomyces stipitis (strain ATCC 58785 / CBS 6054 / NBRC 10063 / NRRL Y-11545) (Yeast).